Reading from the N-terminus, the 81-residue chain is Acyl carrier protein (81 aa).

Residues 4–79 form the Carrier domain; that stretch reads AEIKDKVYDI…QAIDYIVNKK (76 aa). Residue S39 is modified to O-(pantetheine 4'-phosphoryl)serine.

The protein belongs to the acyl carrier protein (ACP) family. Post-translationally, 4'-phosphopantetheine is transferred from CoA to a specific serine of apo-ACP by AcpS. This modification is essential for activity because fatty acids are bound in thioester linkage to the sulfhydryl of the prosthetic group.

The protein resides in the cytoplasm. It participates in lipid metabolism; fatty acid biosynthesis. In terms of biological role, carrier of the growing fatty acid chain in fatty acid biosynthesis. This Chlorobaculum tepidum (strain ATCC 49652 / DSM 12025 / NBRC 103806 / TLS) (Chlorobium tepidum) protein is Acyl carrier protein.